Consider the following 616-residue polypeptide: Dihydroxy-acid dehydratase (616 aa).

Mg(2+) is bound at residue D81. Residue C122 participates in [2Fe-2S] cluster binding. Mg(2+) is bound by residues D123 and K124. K124 carries the post-translational modification N6-carboxylysine. C195 provides a ligand contact to [2Fe-2S] cluster. E491 serves as a coordination point for Mg(2+). S517 (proton acceptor) is an active-site residue.

Belongs to the IlvD/Edd family. As to quaternary structure, homodimer. [2Fe-2S] cluster serves as cofactor. Mg(2+) is required as a cofactor.

It catalyses the reaction (2R)-2,3-dihydroxy-3-methylbutanoate = 3-methyl-2-oxobutanoate + H2O. It carries out the reaction (2R,3R)-2,3-dihydroxy-3-methylpentanoate = (S)-3-methyl-2-oxopentanoate + H2O. It participates in amino-acid biosynthesis; L-isoleucine biosynthesis; L-isoleucine from 2-oxobutanoate: step 3/4. It functions in the pathway amino-acid biosynthesis; L-valine biosynthesis; L-valine from pyruvate: step 3/4. Functionally, functions in the biosynthesis of branched-chain amino acids. Catalyzes the dehydration of (2R,3R)-2,3-dihydroxy-3-methylpentanoate (2,3-dihydroxy-3-methylvalerate) into 2-oxo-3-methylpentanoate (2-oxo-3-methylvalerate) and of (2R)-2,3-dihydroxy-3-methylbutanoate (2,3-dihydroxyisovalerate) into 2-oxo-3-methylbutanoate (2-oxoisovalerate), the penultimate precursor to L-isoleucine and L-valine, respectively. The protein is Dihydroxy-acid dehydratase of Salmonella agona (strain SL483).